The sequence spans 759 residues: Cullin-4A (759 aa).

The disordered stretch occupies residues 1-40 (MADEGPRKGSVSALMGRTNGLTKPAALAGGPAKPGGTGGS). Lys-8 is covalently cross-linked (Glycyl lysine isopeptide (Lys-Gly) (interchain with G-Cter in SUMO2)). Residue Ser-10 is modified to Phosphoserine. Positions 20 to 31 (GLTKPAALAGGP) are enriched in low complexity. Lys-33 participates in a covalent cross-link: Glycyl lysine isopeptide (Lys-Gly) (interchain with G-Cter in ubiquitin). In terms of domain architecture, Cullin neddylation spans 691 to 750 (DRQYQIDAAIVRIMKMRKTLGHNLLVSELYNQLKFPVKPGDLKKRIESLIDRDYMERDKD). Lys-705 is covalently cross-linked (Glycyl lysine isopeptide (Lys-Gly) (interchain with G-Cter in NEDD8)).

This sequence belongs to the cullin family. In terms of assembly, can self-associate. Component of multiple DCX (DDB1-CUL4-X-box) E3 ubiquitin-protein ligase complexes that seem to consist of DDB1, CUL4A or CUL4B, RBX1 and a variable substrate recognition component which seems to belong to a protein family described as DCAF (Ddb1- and Cul4-associated factor) or CDW (CUL4-DDB1-associated WD40-repeat) proteins. Component of the CSA complex (DCX(ERCC8) complex) containing ERCC8, RBX1, DDB1 and CUL4A; the CSA complex interacts with RNA polymerase II; upon UV irradiation it interacts with the COP9 signalosome and preferentially with the hyperphosphorylated form of RNA polymerase II. Component of the DCX(DET1-COP1) complex with the substrate recognition component DET1 and COP1. Component of the DCX(DDB2) complex with the substrate recognition component DDB2. Component of the DCX(DTL) complex with the putative substrate recognition component DTL. Component of DCX complexes part of the DesCEND (destruction via C-end degrons) pathway, which contain either TRPC4AP or DCAF12 as substrate-recognition component. Component of the DCX(AMBRA1) complex with the substrate recognition component AMBRA1. Interacts with DDB1, RBX1, RNF7, CDT1, TIP120A/CAND1, SKP2, CDKN1B, MDM2, TP53 and HOXA9. Interacts with DDB2; the interactions with DDB2 and CAND1 are mutually exclusive. Interacts with DCAF1, DTL, DDA1, DCAF6, DCAF4, DCAF16, DCAF17, DET1, WDTC1, DCAF5, DCAF11, WDR24A, COP1, PAFAH1B1, ERCC8, GRWD1, FBXW5, RBBP7, GNB2, WSB1, WSB2, NUP43, PWP1, FBXW8, ATG16L1, KATNB1, RBBP4, RBBP5, LRWD1 and DCAF8. May interact with WDR26, WDR51B, SNRNP40, WDR61, WDR76, WDR5. Interacts (when neddylated) with ARIH1; leading to activate the E3 ligase activity of ARIH1. The DDB1-CUL4A complex interacts with CRY1. Interacts (unneddylated form) with DCUN1D1, DCUN1D2, DCUN1D3, DCUN1D4 and DCUN1D5; these interactions promote the cullin neddylation. As to quaternary structure, (Microbial infection) Interacts with murine cytomegalovirus M48. Neddylated; required for activity of cullin-RING-based E3 ubiquitin-protein ligase complexes. Deneddylated via its interaction with the COP9 signalosome (CSN) complex. Post-translationally, (Microbial infection) Deneddylated by murine cytomegalovirus M48 leading to a S-phase-like environment that is required for efficient replication of the viral genome. As to expression, expressed in oocytes (at protein level). In the ovary, also expressed in cumulus cells. Expressed in testis, spleen and kidney.

It participates in protein modification; protein ubiquitination. Core component of multiple cullin-RING-based E3 ubiquitin-protein ligase complexes which mediate the ubiquitination of target proteins. As a scaffold protein may contribute to catalysis through positioning of the substrate and the ubiquitin-conjugating enzyme. The E3 ubiquitin-protein ligase activity of the complex is dependent on the neddylation of the cullin subunit and is inhibited by the association of the deneddylated cullin subunit with TIP120A/CAND1. The functional specificity of the E3 ubiquitin-protein ligase complex depends on the variable substrate recognition component. DCX(DET1-COP1) directs ubiquitination of JUN. DCX(DDB2) directs ubiquitination of XPC. DCX(DDB2) ubiquitinates histones H3-H4 and is required for efficient histone deposition during replication-coupled (H3.1) and replication-independent (H3.3) nucleosome assembly, probably by facilitating the transfer of H3 from ASF1A/ASF1B to other chaperones involved in histone deposition. DCX(DTL) plays a role in PCNA-dependent polyubiquitination of CDT1 and MDM2-dependent ubiquitination of p53/TP53 in response to radiation-induced DNA damage and during DNA replication. DCX(DTL) directs autoubiquitination of DTL. In association with DDB1 and SKP2 probably is involved in ubiquitination of CDKN1B/p27kip. Is involved in ubiquitination of HOXA9. The DDB1-CUL4A-DTL E3 ligase complex regulates the circadian clock function by mediating the ubiquitination and degradation of CRY1. The DCX(ERCC8) complex (also named CSA complex) plays a role in transcription-coupled repair (TCR). A number of DCX complexes (containing either TRPC4AP or DCAF12 as substrate-recognition component) are part of the DesCEND (destruction via C-end degrons) pathway, which recognizes a C-degron located at the extreme C terminus of target proteins, leading to their ubiquitination and degradation. With CUL4B, contributes to ribosome biogenesis. The DCX(AMBRA1) complex is a master regulator of the transition from G1 to S cell phase by mediating ubiquitination of phosphorylated cyclin-D (CCND1, CCND2 and CCND3). The DCX(AMBRA1) complex also acts as a regulator of Cul5-RING (CRL5) E3 ubiquitin-protein ligase complexes by mediating ubiquitination and degradation of Elongin-C (ELOC) component of CRL5 complexes. The protein is Cullin-4A of Mus musculus (Mouse).